Reading from the N-terminus, the 1228-residue chain is S-layer protein (1228 aa).

A signal peptide spans 1 to 30 (MDRKKAVKLATASAIAASAFVAANPNASEA).

Its subcellular location is the secreted. It localises to the cell wall. The protein resides in the S-layer. In terms of biological role, the S-layer is a paracrystalline mono-layered assembly of proteins which coat the surface of bacteria. This chain is S-layer protein (sbsA), found in Geobacillus stearothermophilus (Bacillus stearothermophilus).